The sequence spans 473 residues: Glycosyl hydrolase family 109 protein 2 (473 aa).

The tat-type signal signal peptide spans 1-31 (MSIFSSRRQFLKSLGLAAGAAAAGNALPGKA). NAD(+) contacts are provided by residues 77 to 78 (GR), Asp99, 148 to 151 (WSSH), 168 to 169 (EV), and Asn197. Residues Tyr226, Arg244, 256 to 259 (YPTH), and Tyr339 contribute to the substrate site. An NAD(+)-binding site is contributed by Tyr256.

It belongs to the Gfo/Idh/MocA family. Glycosyl hydrolase 109 subfamily. NAD(+) is required as a cofactor. In terms of processing, predicted to be exported by the Tat system. The position of the signal peptide cleavage has not been experimentally proven.

Functionally, glycosidase. In Akkermansia muciniphila (strain ATCC BAA-835 / DSM 22959 / JCM 33894 / BCRC 81048 / CCUG 64013 / CIP 107961 / Muc), this protein is Glycosyl hydrolase family 109 protein 2.